The primary structure comprises 139 residues: uncharacterized protein (139 aa).

Residues 1–133 form the Globin domain; sequence MLSEETIRVI…LAKTLITLEK (133 aa).

Belongs to the globin family.

This is an uncharacterized protein from Aquifex aeolicus (strain VF5).